Reading from the N-terminus, the 233-residue chain is tRNA1(Val) (adenine(37)-N6)-methyltransferase (233 aa).

This sequence belongs to the methyltransferase superfamily. tRNA (adenine-N(6)-)-methyltransferase family.

It localises to the cytoplasm. The enzyme catalyses adenosine(37) in tRNA1(Val) + S-adenosyl-L-methionine = N(6)-methyladenosine(37) in tRNA1(Val) + S-adenosyl-L-homocysteine + H(+). Functionally, specifically methylates the adenine in position 37 of tRNA(1)(Val) (anticodon cmo5UAC). The polypeptide is tRNA1(Val) (adenine(37)-N6)-methyltransferase (Shewanella amazonensis (strain ATCC BAA-1098 / SB2B)).